Consider the following 263-residue polypeptide: uncharacterized protein (263 aa).

Residues 107–246 (ILGVLNGDGS…CCSFLEKLGI (140 aa)) enclose the DOD-type homing endonuclease domain.

This is an uncharacterized protein from Methanocaldococcus jannaschii (strain ATCC 43067 / DSM 2661 / JAL-1 / JCM 10045 / NBRC 100440) (Methanococcus jannaschii).